A 956-amino-acid polypeptide reads, in one-letter code: uncharacterized protein (956 aa).

The stretch at 918–942 (NSINEAIEKLNEAADAYQAIIDQQK) forms a coiled coil.

This is an uncharacterized protein from Acanthamoeba polyphaga (Amoeba).